We begin with the raw amino-acid sequence, 462 residues long: MNTPTPTQRTWYRTTIFNVSVVAVCAFIAPGLWAAMNGLGGAGSADPYYVNAANAVIFCLQVVVCVFGSSLIAKIGLKWAFALGMVGFPIYASSVYCNVKYNNSWYIMLACVIDGICSGIFWLTEGAIVLAYPEKHRRGKYLAYWLASRIMGQMIGGAVTLGVNAGNQEEGHISVQTYLVFISIQAIGPFVAATLSPPEKVQRSDQSKVKINLPAGLKAELHAMWKLLGRTEILLLLPMMFQSVFSEAFFSTYNATYFTVRSRALSSLVASTCVIISNFLLGFFLDWRRLSVNTRAMAAFIIIYAFELSLYVYAMVVNKEYERQEPRPLFDWTDDGFGRAVCVYILMLVGFNLMYDYLYWLIGTVNRDGGDIIRLSAVVRGVESAGQAISYGINSVDSFLLSSAVAVNLSFFAACIVPSAFVIYRVGVVNGVKVHHIQQDETLQTSGEGSHDIMDANGKSDD.

A run of 3 helical transmembrane segments spans residues 16–36 (IFNV…WAAM), 55–75 (AVIF…IAKI), and 79–99 (WAFA…YCNV). Asn102 carries an N-linked (GlcNAc...) asparagine glycan. 4 helical membrane-spanning segments follow: residues 104–124 (SWYI…FWLT), 143–163 (AYWL…TLGV), 173–193 (ISVQ…FVAA), and 233–253 (ILLL…FSTY). Asn254 carries an N-linked (GlcNAc...) asparagine glycan. The next 4 membrane-spanning stretches (helical) occupy residues 265–285 (LSSL…GFFL), 297–317 (MAAF…AMVV), 343–363 (VYIL…WLIG), and 404–424 (AVAV…FVIY). Residues 443 to 462 (LQTSGEGSHDIMDANGKSDD) form a disordered region. Basic and acidic residues predominate over residues 449 to 462 (GSHDIMDANGKSDD).

Belongs to the unc-93 family.

The protein resides in the membrane. In terms of biological role, part of the gene cluster that mediates the biosynthesis of notoamide, a fungal indole alkaloid that belongs to a family of natural products containing a characteristic bicyclo[2.2.2]diazaoctane core. The first step of notoamide biosynthesis involves coupling of L-proline and L-tryptophan by the bimodular NRPS notE', to produce cyclo-L-tryptophan-L-proline called brevianamide F. The reverse prenyltransferase notF' then acts as a deoxybrevianamide E synthase and converts brevianamide F to deoxybrevianamide E via reverse prenylation at C-2 of the indole ring leading to the bicyclo[2.2.2]diazaoctane core. Deoxybrevianamide E is further hydroxylated at C-6 of the indole ring, likely catalyzed by the cytochrome P450 monooxygenase notG', to yield 6-hydroxy-deoxybrevianamide E. 6-hydroxy-deoxybrevianamide E is a specific substrate of the prenyltransferase notC' for normal prenylation at C-7 to produce 6-hydroxy-7-prenyl-deoxybrevianamide, also called notoamide S. As the proposed pivotal branching point in notoamide biosynthesis, notoamide S can be diverted to notoamide E through an oxidative pyran ring closure putatively catalyzed by either notH' cytochrome P450 monooxygenase or the notD' FAD-linked oxidoreductase. This step would be followed by an indole 2,3-epoxidation-initiated pinacol-like rearrangement catalyzed by the notB' FAD-dependent monooxygenase leading to the formation of notoamide C and notoamide D. On the other hand notoamide S is converted to notoamide T by notH' (or notD'), a bifunctional oxidase that also functions as the intramolecular Diels-Alderase responsible for generation of (-)-notoamide T. To generate antipodal (+)-notoaminide T, notH (or notD) in Aspergillus strain MF297-2 is expected to catalyze a Diels-Alder reaction leading to the opposite stereochemistry. The remaining oxidoreductase notD' (or notH') likely catalyzes the oxidative pyran ring formation to yield (-)-stephacidin A. The FAD-dependent monooxygenase notI' is highly similar to notB' and is predicted to catalyze a similar conversion from (-)-stephacidin A to (+)-notoamide B via the 2,3-epoxidation of (-)-stephacidin A followed by a pinacol-type rearrangement. Finally, it remains unclear which enzyme could be responsible for the final hydroxylation steps leading to notoamide A and sclerotiamide. The function of notO' in the notoamide biosynthesis has not been determined yet. The polypeptide is Notoamide biosynthesis cluster protein O' (Aspergillus versicolor).